The sequence spans 61 residues: Large ribosomal subunit protein uL30 (61 aa).

It belongs to the universal ribosomal protein uL30 family. As to quaternary structure, part of the 50S ribosomal subunit.

This is Large ribosomal subunit protein uL30 from Clostridioides difficile (strain 630) (Peptoclostridium difficile).